We begin with the raw amino-acid sequence, 54 residues long: ATP synthase protein 8 (54 aa).

Residues 9–25 (WVFLFFLVWLVLGFLGL) traverse the membrane as a helical segment.

It belongs to the ATPase protein 8 family. F-type ATPases have 2 components, CF(1) - the catalytic core - and CF(0) - the membrane proton channel.

Its subcellular location is the mitochondrion membrane. Functionally, mitochondrial membrane ATP synthase (F(1)F(0) ATP synthase or Complex V) produces ATP from ADP in the presence of a proton gradient across the membrane which is generated by electron transport complexes of the respiratory chain. F-type ATPases consist of two structural domains, F(1) - containing the extramembraneous catalytic core and F(0) - containing the membrane proton channel, linked together by a central stalk and a peripheral stalk. During catalysis, ATP synthesis in the catalytic domain of F(1) is coupled via a rotary mechanism of the central stalk subunits to proton translocation. Part of the complex F(0) domain. Minor subunit located with subunit a in the membrane. The chain is ATP synthase protein 8 (MTATP8) from Branchiostoma floridae (Florida lancelet).